Consider the following 325-residue polypeptide: Beta-ketoacyl-[acyl-carrier-protein] synthase III (325 aa).

Residues Cys116 and His252 contribute to the active site. The segment at 253–257 is ACP-binding; that stretch reads QANLR. Asn282 is a catalytic residue.

This sequence belongs to the thiolase-like superfamily. FabH family. As to quaternary structure, homodimer.

It localises to the cytoplasm. The catalysed reaction is malonyl-[ACP] + acetyl-CoA + H(+) = 3-oxobutanoyl-[ACP] + CO2 + CoA. The protein operates within lipid metabolism; fatty acid biosynthesis. Functionally, catalyzes the condensation reaction of fatty acid synthesis by the addition to an acyl acceptor of two carbons from malonyl-ACP. Catalyzes the first condensation reaction which initiates fatty acid synthesis and may therefore play a role in governing the total rate of fatty acid production. Possesses both acetoacetyl-ACP synthase and acetyl transacylase activities. Its substrate specificity determines the biosynthesis of branched-chain and/or straight-chain of fatty acids. This is Beta-ketoacyl-[acyl-carrier-protein] synthase III from Xanthomonas axonopodis pv. citri (strain 306).